A 388-amino-acid chain; its full sequence is Probable tRNA sulfurtransferase (388 aa).

The region spanning 55-162 is the THUMP domain; the sequence is VTLDDKLKKI…PEGVLIFTDR (108 aa). Residues 180 to 181, 205 to 206, Arg-264, Gly-286, and Gln-295 each bind ATP; these read LL and TF.

The protein belongs to the ThiI family.

It localises to the cytoplasm. It catalyses the reaction [ThiI sulfur-carrier protein]-S-sulfanyl-L-cysteine + a uridine in tRNA + 2 reduced [2Fe-2S]-[ferredoxin] + ATP + H(+) = [ThiI sulfur-carrier protein]-L-cysteine + a 4-thiouridine in tRNA + 2 oxidized [2Fe-2S]-[ferredoxin] + AMP + diphosphate. The catalysed reaction is [ThiS sulfur-carrier protein]-C-terminal Gly-Gly-AMP + S-sulfanyl-L-cysteinyl-[cysteine desulfurase] + AH2 = [ThiS sulfur-carrier protein]-C-terminal-Gly-aminoethanethioate + L-cysteinyl-[cysteine desulfurase] + A + AMP + 2 H(+). The protein operates within cofactor biosynthesis; thiamine diphosphate biosynthesis. Its function is as follows. Catalyzes the ATP-dependent transfer of a sulfur to tRNA to produce 4-thiouridine in position 8 of tRNAs, which functions as a near-UV photosensor. Also catalyzes the transfer of sulfur to the sulfur carrier protein ThiS, forming ThiS-thiocarboxylate. This is a step in the synthesis of thiazole, in the thiamine biosynthesis pathway. The sulfur is donated as persulfide by IscS. This Thermotoga maritima (strain ATCC 43589 / DSM 3109 / JCM 10099 / NBRC 100826 / MSB8) protein is Probable tRNA sulfurtransferase.